Here is a 142-residue protein sequence, read N- to C-terminus: Large ribosomal subunit protein uL11 (142 aa).

It belongs to the universal ribosomal protein uL11 family. As to quaternary structure, part of the ribosomal stalk of the 50S ribosomal subunit. Interacts with L10 and the large rRNA to form the base of the stalk. L10 forms an elongated spine to which L12 dimers bind in a sequential fashion forming a multimeric L10(L12)X complex. In terms of processing, one or more lysine residues are methylated.

Functionally, forms part of the ribosomal stalk which helps the ribosome interact with GTP-bound translation factors. In Sinorhizobium medicae (strain WSM419) (Ensifer medicae), this protein is Large ribosomal subunit protein uL11.